The primary structure comprises 454 residues: tRNA modification GTPase MnmE (454 aa).

3 residues coordinate (6S)-5-formyl-5,6,7,8-tetrahydrofolate: Arg23, Glu80, and Lys120. Residues 216–377 (GMKVVIAGRP…LRNHLKQSMG (162 aa)) form the TrmE-type G domain. Residue Asn226 participates in K(+) binding. Residues 226–231 (NAGKSS), 245–251 (TDIAGTT), 270–273 (DTAG), 335–338 (NKAD), and 358–360 (SAR) contribute to the GTP site. Residue Ser230 coordinates Mg(2+). K(+)-binding residues include Thr245, Ile247, and Thr250. Thr251 contributes to the Mg(2+) binding site. Lys454 lines the (6S)-5-formyl-5,6,7,8-tetrahydrofolate pocket.

The protein belongs to the TRAFAC class TrmE-Era-EngA-EngB-Septin-like GTPase superfamily. TrmE GTPase family. In terms of assembly, homodimer. Heterotetramer of two MnmE and two MnmG subunits. The cofactor is K(+).

It is found in the cytoplasm. Its function is as follows. Exhibits a very high intrinsic GTPase hydrolysis rate. Involved in the addition of a carboxymethylaminomethyl (cmnm) group at the wobble position (U34) of certain tRNAs, forming tRNA-cmnm(5)s(2)U34. The chain is tRNA modification GTPase MnmE from Escherichia coli O139:H28 (strain E24377A / ETEC).